A 905-amino-acid polypeptide reads, in one-letter code: Dopamine D2-like receptor (905 aa).

A disordered region spans residues 1 to 23; that stretch reads MLSPFDWRRGISSSGTGGTMAAQ. Residues 1-377 are Extracellular-facing; it reads MLSPFDWRRG…GELRVVDHNY (377 aa). N-linked (GlcNAc...) asparagine glycans are attached at residues N88, N146, N156, N166, N174, N257, N314, and N343. The chain crosses the membrane as a helical span at residues 378–398; the sequence is WALILILFPILTLFGNILVIL. The Cytoplasmic portion of the chain corresponds to 399 to 416; that stretch reads SVCRERSLQTVTNYFIVS. Residues 417-437 form a helical membrane-spanning segment; sequence LAIADLLVAVVVMPFAVYFLV. The Extracellular portion of the chain corresponds to 438-450; it reads NGAWALPDVVCDF. A disulfide bridge connects residues C448 and C525. Residues 451–471 form a helical membrane-spanning segment; the sequence is YIAMDVICSTSSIFNLVAISI. Residues 472–493 are Cytoplasmic-facing; sequence DRYIAVTQPIKYAKHKNSRRVC. Residues 494-514 form a helical membrane-spanning segment; that stretch reads LTILLVWAISAAIGSPIVLGL. Residues 515-531 are Extracellular-facing; sequence NNTPNREPDVCAFYNAD. The helical transmembrane segment at 532-552 threads the bilayer; the sequence is FILYSSLSSFYIPCIIMVFLY. The Cytoplasmic portion of the chain corresponds to 553 to 830; sequence WNIFKALRSR…AKKERKATKT (278 aa). Disordered stretches follow at residues 600-631, 702-753, and 780-799; these read SRHA…ISPD, ATSA…SVGV, and DSTL…KNSQ. Over residues 702-722 the composition is skewed to low complexity; that stretch reads ATSAAPRSSGSPPDSPLPSGA. The span at 723 to 734 shows a compositional bias: polar residues; it reads TLQRSSVSSQRR. A compositionally biased stretch (basic and acidic residues) spans 735 to 746; sequence PTGDDSPKRGEP. Residues 831–851 form a helical membrane-spanning segment; it reads LAIVLGVFLFCWLPFFSCNIM. At 852–869 the chain is on the extracellular side; the sequence is DAMCAKFKKDCRPGLTAY. Residues 870–890 traverse the membrane as a helical segment; sequence MMTTWLGYINSFVNPVIYTIF. Topologically, residues 891–905 are cytoplasmic; sequence NPEFRKAFKKIMHMG.

Belongs to the G-protein coupled receptor 1 family. In terms of tissue distribution, highest expression is in adult heads.

Its subcellular location is the cell membrane. Functionally, receptor for dopamine. The activity of this receptor is mediated by G proteins which inhibit adenylyl cyclase. In Drosophila melanogaster (Fruit fly), this protein is Dopamine D2-like receptor.